A 614-amino-acid polypeptide reads, in one-letter code: Probable LRR receptor-like serine/threonine-protein kinase At5g63710 (614 aa).

The N-terminal stretch at 1-50 is a signal peptide; sequence MAHSGNGESFHDPLRGFIQRNCFRWNNQKLILQCFMALAFVGITSSTTQP. Residues 51–224 are Extracellular-facing; the sequence is DIEGGALLQL…VTSSKKKLRD (174 aa). N-linked (GlcNAc...) asparagine glycans are attached at residues Asn65, Asn125, Asn146, and Asn175. LRR repeat units lie at residues 115–139, 141–163, and 164–187; these read LKFL…LGNM, NLQT…WSQL, and SNLK…FFSI. A helical transmembrane segment spans residues 225-245; that stretch reads ITLTASCVASIILFLGAMVMY. Over 246–613 the chain is Cytoplasmic; that stretch reads HHHRVRRTKY…DQESIRLSTA (368 aa). A Phosphothreonine modification is found at Thr286. The Protein kinase domain maps to 289–573; it reads FNESNLIGQG…GTGGLAEKWT (285 aa). 295–303 is a binding site for ATP; that stretch reads IGQGGFGKV. At Thr312 the chain carries Phosphothreonine. Residue Lys317 participates in ATP binding. At Ser370 the chain carries Phosphoserine. Thr389 bears the Phosphothreonine mark. Residue Asp416 is the Proton acceptor of the active site. Phosphothreonine occurs at positions 449, 450, and 455. Phosphotyrosine is present on Tyr463. Thr466 carries the phosphothreonine modification. Ser470 is subject to Phosphoserine. Thr545 is modified (phosphothreonine).

This sequence belongs to the protein kinase superfamily. Ser/Thr protein kinase family.

It is found in the cell membrane. The catalysed reaction is L-seryl-[protein] + ATP = O-phospho-L-seryl-[protein] + ADP + H(+). The enzyme catalyses L-threonyl-[protein] + ATP = O-phospho-L-threonyl-[protein] + ADP + H(+). This is Probable LRR receptor-like serine/threonine-protein kinase At5g63710 from Arabidopsis thaliana (Mouse-ear cress).